The following is an 83-amino-acid chain: Large ribosomal subunit protein eL14 (83 aa).

Belongs to the eukaryotic ribosomal protein eL14 family.

The polypeptide is Large ribosomal subunit protein eL14 (Thermococcus gammatolerans (strain DSM 15229 / JCM 11827 / EJ3)).